The chain runs to 254 residues: UPF0246 protein FTH_1656 (254 aa).

Belongs to the UPF0246 family.

This Francisella tularensis subsp. holarctica (strain OSU18) protein is UPF0246 protein FTH_1656.